The following is a 67-amino-acid chain: COP9 signalosome complex subunit 9 homolog (67 aa).

The tract at residues 1–31 (MKPSLAADEMFSEGPGYMEMDESGGATGMMM) is disordered.

The protein belongs to the CSN9 family. Probable component of the COP9 signalosome (CSN) complex.

In terms of biological role, component of the COP9 signalosome complex (CSN), a complex involved in various cellular and developmental processes. The CSN complex is an essential regulator of the ubiquitin (Ubl) conjugation pathway by mediating the deneddylation of the cullin subunits of SCF-type E3 ligase complexes, leading to decrease the Ubl ligase activity. The polypeptide is COP9 signalosome complex subunit 9 homolog (Drosophila melanogaster (Fruit fly)).